A 49-amino-acid chain; its full sequence is Large ribosomal subunit protein bL33B (49 aa).

Belongs to the bacterial ribosomal protein bL33 family.

This is Large ribosomal subunit protein bL33B from Geobacillus thermodenitrificans (strain NG80-2).